We begin with the raw amino-acid sequence, 471 residues long: Putative multidrug resistance protein MdtD (471 aa).

The next 13 helical transmembrane spans lie at 12–32 (LWIV…VNTA), 49–69 (MVVV…GWLA), 77–97 (IFFT…WSST), 102–124 (VLAR…LTVM), 138–158 (FVTL…GILV), 165–185 (WIFL…LMLM), 197–217 (LSGF…LDGS), 222–242 (LSPL…ALYL), 263–283 (FSLG…LPFM), 286–306 (VFLQ…MIPM), 342–362 (LLFM…VLFL), 396–416 (MIMQ…LGMF), and 431–451 (VFMY…LIFA).

This sequence belongs to the major facilitator superfamily. TCR/Tet family.

It localises to the cell inner membrane. This Citrobacter koseri (strain ATCC BAA-895 / CDC 4225-83 / SGSC4696) protein is Putative multidrug resistance protein MdtD.